Consider the following 134-residue polypeptide: MSDNAIRPRPNPWQYIRYCYGARLPDSMRDWVRNDLAGKGAAIRMMIRVAVPAVLVLAPFWLIPTSLDVHLSMTLPILIPFVYFSHALNKVWRRHMLRVHNLDPELVDEHARQRDAHIHRAYIERYGPRPDPND.

The next 2 helical transmembrane spans lie at 49–69 and 71–91; these read VAVP…SLDV and LSMT…LNKV.

It is found in the cell membrane. This is an uncharacterized protein from Mycobacterium tuberculosis (strain ATCC 25618 / H37Rv).